Here is a 274-residue protein sequence, read N- to C-terminus: MPELPEVETTKQGIKPHLEGCMITSVQVRNQKLRLPVPLNLNELCEGKHITAITRRGKYILLHMDKGYLLIHLGMSGHLRIVSQTANPQKHDHVDLHINNGLALRFRDPRRFGLFIYIDENPYQHPLLAHLGPEPLSDDFNSEYLLRKAANKSQSIKSFIMDSQIVVGIGNIYAAESLFLAKIHPNTSAKKITTEEFNSLTGHIKKILESAIEAGGTTLRDFYSSDGKPGYFRFALKVYGRKNLPCLVCENKIETVVIAGRHSAFCPHCQPIIT.

Pro2 (schiff-base intermediate with DNA) is an active-site residue. Residue Glu3 is the Proton donor of the active site. Lys58 acts as the Proton donor; for beta-elimination activity in catalysis. Residues His91, Arg110, and Lys152 each coordinate DNA. The segment at 237–271 (KVYGRKNLPCLVCENKIETVVIAGRHSAFCPHCQP) adopts an FPG-type zinc-finger fold. Arg261 functions as the Proton donor; for delta-elimination activity in the catalytic mechanism.

It belongs to the FPG family. As to quaternary structure, monomer. Zn(2+) is required as a cofactor.

It catalyses the reaction Hydrolysis of DNA containing ring-opened 7-methylguanine residues, releasing 2,6-diamino-4-hydroxy-5-(N-methyl)formamidopyrimidine.. It carries out the reaction 2'-deoxyribonucleotide-(2'-deoxyribose 5'-phosphate)-2'-deoxyribonucleotide-DNA = a 3'-end 2'-deoxyribonucleotide-(2,3-dehydro-2,3-deoxyribose 5'-phosphate)-DNA + a 5'-end 5'-phospho-2'-deoxyribonucleoside-DNA + H(+). Its function is as follows. Involved in base excision repair of DNA damaged by oxidation or by mutagenic agents. Acts as a DNA glycosylase that recognizes and removes damaged bases. Has a preference for oxidized purines, such as 7,8-dihydro-8-oxoguanine (8-oxoG). Has AP (apurinic/apyrimidinic) lyase activity and introduces nicks in the DNA strand. Cleaves the DNA backbone by beta-delta elimination to generate a single-strand break at the site of the removed base with both 3'- and 5'-phosphates. The chain is Formamidopyrimidine-DNA glycosylase from Legionella pneumophila (strain Lens).